The chain runs to 407 residues: MLFDKVKAFSVQLDGATAGVEPVFSGGQAVAGRVLLELSSAARVGALRLRARGRAHVHWTESRSAGSSTAYTQSYSERVEVVSHRATLLAPDTGETTTLPPGRHEFLFSFQLPPTLVTSFEGKHGSVRYCIKATLHRPWVPARRARKVFTVIEPVDINTPALLAPQAGAREKVARSWYCNRGLVSLSAKIDRKGYTPGEVIPVFAEIDNGSTRPVLPRAAVVQTQTFMARGARKQKRAVVASLAGEPVGPGQRALWQGRALRIPPVGPSILHCRVLHVDYALKVCVDIPGTSKLLLELPLVIGTIPLHPFGSRSSSVGSHASFLLDWRLGALPERPEAPPEYSEVVADTEEAALGQSPFPLPQDPDMSLEGPFFAYIQEFRYRPPPLYSEEDPNPLLGDMRPRCMTC.

It belongs to the arrestin family. Interacts with WWP1 (via WW domains).

This is Arrestin domain-containing protein 2 (ARRDC2) from Homo sapiens (Human).